The sequence spans 330 residues: MEEVEAANRSAIESCHGVLNLLSQRTSDPKSLTVETGEVVSKFKRVASLLTRGLGHGKFRSTNKFRSSFPQHIFLESPICCGNDLSGDYTQVLAPEPLQMVPASAVYNEMEPKHQLGHPSLMLSHKMCVDKSFLELKPPPFRAPYQLIHNHQQIAYSRSNSGVNLKFDGSGSSCYTPSVSNGSRSFVSSLSMDASVTDYDRNSFHLTGLSRGSDQQHTRKMCSGSLKCGSRSKCHCSKKRKLRVKRSIKVPAISNKIADIPPDEYSWRKYGQKPIKGSPHPRGYYKCSSVRGCPARKHVERCIDETSMLIVTYEGEHNHSRILSSQSAHT.

The segment at residues 256 to 322 (KIADIPPDEY…YEGEHNHSRI (67 aa)) is a DNA-binding region (WRKY).

The protein localises to the nucleus. Transcription factor. Interacts specifically with the W box (5'-(T)TGAC[CT]-3'), a frequently occurring elicitor-responsive cis-acting element. The protein is Probable WRKY transcription factor 39 (WRKY39) of Arabidopsis thaliana (Mouse-ear cress).